The sequence spans 287 residues: MAMQERCESLCSDELISSSDAFYLKTRKPYTITKQREKWTEAEHEKFVEALKLYGRAWRRIEEHVGTKTAVQIRSHAQKFFTKVARDFGVSSESIEIPPPRPKRKPMHPYPRKLVIPDAKEMVYAELTGSKLIQDEDNRSPTSVLSAHGSDGLGSIGSNSPNSSSAELSSHTEESLSLEAETKQSLKLFGKTFVVGDYNSSMSCDDSEDGKKKLYSETQSLQCSSSTSENAETEVVVSEFKRSERSAFSQLKSSVTEMNNMRGFMPYKKRVKVEENIDNVKLSYPLW.

Residues 31 to 85 form the HTH myb-type domain; it reads TITKQREKWTEAEHEKFVEALKLYGRAWRRIEEHVGTKTAVQIRSHAQKFFTKVA. Residues 58–81 constitute a DNA-binding region (H-T-H motif); that stretch reads WRRIEEHVGTKTAVQIRSHAQKFF. The segment at 134–177 is disordered; that stretch reads QDEDNRSPTSVLSAHGSDGLGSIGSNSPNSSSAELSSHTEESLS. Over residues 156 to 169 the composition is skewed to low complexity; it reads IGSNSPNSSSAELS.

It is found in the nucleus. Positive regulator for cold-responsive gene expression and cold tolerance. Part of a regulatory feedback loop that controls a subset of the circadian outputs and modulates the central oscillator. Negatively self-regulates its own expression. The sequence is that of Protein REVEILLE 2 (RVE2) from Arabidopsis thaliana (Mouse-ear cress).